Consider the following 389-residue polypeptide: Shewanella-like protein phosphatase 1 (389 aa).

A chloroplast-targeting transit peptide spans 1–53 (MASLYLNSLLPLPPSHPQKLLEPSSSSLLSTSNGNELALKPIVINGDPPTFVS). 4 residues coordinate Mn(2+): aspartate 64, histidine 66, aspartate 102, and asparagine 137. The active-site Proton donor is histidine 138. Positions 242 and 314 each coordinate Mn(2+).

It belongs to the metallophosphoesterase superfamily. SLP family. It depends on Mn(2+) as a cofactor. Expressed in rosettes leaves, shoots and flowers (at protein level).

The protein resides in the plastid. It localises to the chloroplast. In terms of biological role, shows phosphatase activity, hydrolyzing the artificial substrate para-nitrophenylphosphate (pNPP) in vitro. The polypeptide is Shewanella-like protein phosphatase 1 (Arabidopsis thaliana (Mouse-ear cress)).